The following is a 313-amino-acid chain: Phosphoenolpyruvate phosphomutase (313 aa).

Aspartate 69 serves as the catalytic Nucleophile.

Belongs to the isocitrate lyase/PEP mutase superfamily. PEP mutase family.

The enzyme catalyses phosphoenolpyruvate + H(+) = 3-phosphonopyruvate. Its pathway is secondary metabolite biosynthesis; bialaphos biosynthesis. In terms of biological role, formation of a carbon-phosphorus bond by converting phosphoenolpyruvate (PEP) to phosphonopyruvate (P-Pyr). This is Phosphoenolpyruvate phosphomutase (bcpB) from Streptomyces hygroscopicus.